Here is a 232-residue protein sequence, read N- to C-terminus: Thiamine import ATP-binding protein ThiQ (232 aa).

An ABC transporter domain is found at 2 to 230 (LKLTDITWLY…KASASALLGI (229 aa)). Residue 32–39 (GPSGAGKS) coordinates ATP.

This sequence belongs to the ABC transporter superfamily. Thiamine importer (TC 3.A.1.19.1) family. The complex is composed of two ATP-binding proteins (ThiQ), two transmembrane proteins (ThiP) and a solute-binding protein (ThiB).

The protein localises to the cell inner membrane. It carries out the reaction thiamine(out) + ATP + H2O = thiamine(in) + ADP + phosphate + H(+). Its function is as follows. Part of the ABC transporter complex ThiBPQ involved in thiamine import. Responsible for energy coupling to the transport system. This chain is Thiamine import ATP-binding protein ThiQ, found in Escherichia coli O157:H7.